The primary structure comprises 159 residues: ATP synthase subunit b (159 aa).

The helical transmembrane segment at 7 to 27 threads the bilayer; it reads VIFMTIINFCILVAILKHFFW.

Belongs to the ATPase B chain family. As to quaternary structure, F-type ATPases have 2 components, F(1) - the catalytic core - and F(0) - the membrane proton channel. F(1) has five subunits: alpha(3), beta(3), gamma(1), delta(1), epsilon(1). F(0) has three main subunits: a(1), b(2) and c(10-14). The alpha and beta chains form an alternating ring which encloses part of the gamma chain. F(1) is attached to F(0) by a central stalk formed by the gamma and epsilon chains, while a peripheral stalk is formed by the delta and b chains.

It is found in the cell membrane. Functionally, f(1)F(0) ATP synthase produces ATP from ADP in the presence of a proton or sodium gradient. F-type ATPases consist of two structural domains, F(1) containing the extramembraneous catalytic core and F(0) containing the membrane proton channel, linked together by a central stalk and a peripheral stalk. During catalysis, ATP synthesis in the catalytic domain of F(1) is coupled via a rotary mechanism of the central stalk subunits to proton translocation. In terms of biological role, component of the F(0) channel, it forms part of the peripheral stalk, linking F(1) to F(0). The sequence is that of ATP synthase subunit b from Clostridium botulinum (strain Alaska E43 / Type E3).